Reading from the N-terminus, the 541-residue chain is Cilia- and flagella-associated protein 97 (541 aa).

Residues serine 8 and serine 19 each carry the phosphoserine modification. 5 disordered regions span residues 28 to 47 (ESNS…GINK), 93 to 296 (ERKA…KQEN), 313 to 337 (RCVK…VLDA), 406 to 430 (LSRQ…PPKL), and 495 to 514 (HYSP…GLSC). Basic and acidic residues-rich tracts occupy residues 35 to 47 (KQND…GINK), 93 to 107 (ERKA…HIEN), and 142 to 151 (RIPKIVKGED). The segment covering 152–161 (DYYTDGEESS) has biased composition (acidic residues). Threonine 155 carries the phosphothreonine modification. A phosphoserine mark is found at serine 160 and serine 161. The segment covering 176–201 (SSNLKKNVSKKYSSSSLSSSSSRSNS) has biased composition (low complexity). Basic and acidic residues predominate over residues 207–218 (GSDRQRRSESHS). 2 stretches are compositionally biased toward polar residues: residues 219–232 (SGKC…SSPK) and 240–250 (KSSAQPSSTKQ). Serine 230 carries the post-translational modification Phosphoserine. At serine 258 the chain carries Phosphoserine. The segment covering 267–277 (PLSTPDVSPAQ) has biased composition (polar residues). Basic and acidic residues predominate over residues 287–296 (QKVKVKKQEN). A coiled-coil region spans residues 382-459 (RKNYSFTREE…ALLKRLEAVK (78 aa)). Residues 503–513 (SRTSSATSGLS) show a composition bias toward polar residues.

It belongs to the CFAP97 family. In terms of tissue distribution, highly expressed in testis with lower levels detected in other tissues including lung, heart and kidney.

The sequence is that of Cilia- and flagella-associated protein 97 from Mus musculus (Mouse).